The chain runs to 360 residues: Peptide chain release factor 1 (360 aa).

N5-methylglutamine is present on Gln235. Residues 280-293 (DKQSHEQQAKEAAT) show a composition bias toward basic and acidic residues. The segment at 280–300 (DKQSHEQQAKEAATRKSLIGS) is disordered.

This sequence belongs to the prokaryotic/mitochondrial release factor family. Post-translationally, methylated by PrmC. Methylation increases the termination efficiency of RF1.

The protein localises to the cytoplasm. Peptide chain release factor 1 directs the termination of translation in response to the peptide chain termination codons UAG and UAA. In Paraburkholderia xenovorans (strain LB400), this protein is Peptide chain release factor 1.